A 338-amino-acid chain; its full sequence is UDP-glucose 4-epimerase (338 aa).

NAD(+) is bound by residues 16–17 (YI), 37–42 (IDINHT), 59–60 (NL), 81–85 (FAAKT), Thr-126, Tyr-153, Lys-157, and Phe-181. Residues Thr-126 and Tyr-153 each coordinate substrate. Catalysis depends on Tyr-153, which acts as the Proton acceptor. Substrate-binding positions include Asn-182, 198–199 (TL), 215–217 (FLY), Arg-230, and 294–297 (RAGD).

Belongs to the NAD(P)-dependent epimerase/dehydratase family. Homodimer. NAD(+) serves as cofactor.

The enzyme catalyses UDP-alpha-D-glucose = UDP-alpha-D-galactose. Its pathway is carbohydrate metabolism; galactose metabolism. In terms of biological role, involved in the metabolism of galactose. Catalyzes the conversion of UDP-galactose (UDP-Gal) to UDP-glucose (UDP-Glc) through a mechanism involving the transient reduction of NAD. This chain is UDP-glucose 4-epimerase (galE), found in Mycoplasma pneumoniae (strain ATCC 29342 / M129 / Subtype 1) (Mycoplasmoides pneumoniae).